The sequence spans 426 residues: Glutamate-1-semialdehyde 2,1-aminomutase (426 aa).

Lysine 265 bears the N6-(pyridoxal phosphate)lysine mark.

Belongs to the class-III pyridoxal-phosphate-dependent aminotransferase family. HemL subfamily. In terms of assembly, homodimer. It depends on pyridoxal 5'-phosphate as a cofactor.

It is found in the cytoplasm. The enzyme catalyses (S)-4-amino-5-oxopentanoate = 5-aminolevulinate. It functions in the pathway porphyrin-containing compound metabolism; protoporphyrin-IX biosynthesis; 5-aminolevulinate from L-glutamyl-tRNA(Glu): step 2/2. The chain is Glutamate-1-semialdehyde 2,1-aminomutase from Alcanivorax borkumensis (strain ATCC 700651 / DSM 11573 / NCIMB 13689 / SK2).